The chain runs to 238 residues: 3-dehydroquinate dehydratase (238 aa).

3-dehydroquinate-binding positions include 35 to 37 (ELR) and Arg-70. His-133 serves as the catalytic Proton donor/acceptor. Lys-160 (schiff-base intermediate with substrate) is an active-site residue. 3-dehydroquinate-binding residues include Arg-202 and Gln-225.

The protein belongs to the type-I 3-dehydroquinase family. As to quaternary structure, homodimer.

The enzyme catalyses 3-dehydroquinate = 3-dehydroshikimate + H2O. It functions in the pathway metabolic intermediate biosynthesis; chorismate biosynthesis; chorismate from D-erythrose 4-phosphate and phosphoenolpyruvate: step 3/7. In terms of biological role, involved in the third step of the chorismate pathway, which leads to the biosynthesis of aromatic amino acids. Catalyzes the cis-dehydration of 3-dehydroquinate (DHQ) and introduces the first double bond of the aromatic ring to yield 3-dehydroshikimate. The protein is 3-dehydroquinate dehydratase of Staphylococcus aureus (strain Mu3 / ATCC 700698).